The following is a 406-amino-acid chain: Phosphatidylinositol 5-phosphate 4-kinase type-2 alpha (406 aa).

An N-acetylalanine modification is found at alanine 2. At threonine 3 the chain carries Phosphothreonine. Position 14 is a phosphoserine (serine 14). The PIPK domain occupies 33–405; that stretch reads ASDPLLSVLM…RFLDFIGHIL (373 aa). The required for interaction with PIP5K1A stretch occupies residues 59–65; sequence VMLMPDD. Residues lysine 89 and lysine 145 each carry the N6-acetyllysine modification. The interval 288–329 is disordered; the sequence is QEEVECEENDGEEEGESDGTHPVGTPPDSPGNTLNSSPPLAP. Residues 289–304 are compositionally biased toward acidic residues; it reads EEVECEENDGEEEGES.

Homodimer. Interacts with PIP4K2B; the interaction may regulate localization to the nucleus. Probably interacts with PIP5K1A; the interaction inhibits PIP5K1A kinase activity. In terms of processing, phosphorylated in tyrosines. Phosphorylation is induced by light and increases kinase activity. In terms of tissue distribution, expressed ubiquitously, with high levels in the brain. Present in most tissues, except notably skeletal muscle and small intestine.

Its subcellular location is the cell membrane. It localises to the nucleus. It is found in the lysosome. The protein localises to the cytoplasm. The protein resides in the photoreceptor inner segment. Its subcellular location is the cell projection. It localises to the cilium. It is found in the photoreceptor outer segment. It carries out the reaction a 1,2-diacyl-sn-glycero-3-phospho-(1D-myo-inositol-5-phosphate) + ATP = a 1,2-diacyl-sn-glycero-3-phospho-(1D-myo-inositol-4,5-bisphosphate) + ADP + H(+). It catalyses the reaction 1,2-dihexadecanoyl-sn-glycero-3-phospho-(1D-myo-inositol-5-phosphate) + ATP = 1,2-dihexadecanoyl-sn-glycero-3-phospho-(1D-myo-inositol-4,5-bisphosphate) + ADP + H(+). The catalysed reaction is 1,2-dihexadecanoyl-sn-glycero-3-phospho-(1D-myo-inositol-5-phosphate) + GTP = 1,2-dihexadecanoyl-sn-glycero-3-phospho-(1D-myo-inositol-4,5-bisphosphate) + GDP + H(+). With respect to regulation, in rod outer segments, activated by light. Inhibited by I-OMe tyrphostin AG-538 (I-OMe-AG-538), acting as an ATP-competitive inhibitor. Its function is as follows. Catalyzes the phosphorylation of phosphatidylinositol 5-phosphate (PtdIns5P) on the fourth hydroxyl of the myo-inositol ring, to form phosphatidylinositol 4,5-bisphosphate (PtdIns(4,5)P2). Has both ATP- and GTP-dependent kinase activities. May exert its function by regulating the levels of PtdIns5P, which functions in the cytosol by increasing AKT activity and in the nucleus signals through ING2. May regulate the pool of cytosolic PtdIns5P in response to the activation of tyrosine phosphorylation. Required for lysosome-peroxisome membrane contacts and intracellular cholesterol transport through modulating peroxisomal PtdIns(4,5)P2 level. In collaboration with PIP4K2B, has a role in mediating autophagy in times of nutrient stress. Required for autophagosome-lysosome fusion and the regulation of cellular lipid metabolism. May be involved in thrombopoiesis, and the terminal maturation of megakaryocytes and regulation of their size. Negatively regulates insulin signaling through a catalytic-independent mechanism. PIP4Ks interact with PIP5Ks and suppress PIP5K-mediated PtdIns(4,5)P2 synthesis and insulin-dependent conversion to PtdIns(3,4,5)P3. This Homo sapiens (Human) protein is Phosphatidylinositol 5-phosphate 4-kinase type-2 alpha.